The chain runs to 183 residues: Probable chorismate pyruvate-lyase (183 aa).

Substrate-binding residues include Arg-79, Leu-115, and Glu-168.

Belongs to the UbiC family.

The protein resides in the cytoplasm. The catalysed reaction is chorismate = 4-hydroxybenzoate + pyruvate. The protein operates within cofactor biosynthesis; ubiquinone biosynthesis. Its function is as follows. Removes the pyruvyl group from chorismate, with concomitant aromatization of the ring, to provide 4-hydroxybenzoate (4HB) for the ubiquinone pathway. This is Probable chorismate pyruvate-lyase from Chromohalobacter salexigens (strain ATCC BAA-138 / DSM 3043 / CIP 106854 / NCIMB 13768 / 1H11).